The chain runs to 938 residues: Respiratory burst oxidase homolog protein C (938 aa).

The interval 1-63 (MQNSENHHPH…DIGTSAGAGA (63 aa)) is disordered. Topologically, residues 1 to 369 (MQNSENHHPH…MYFLLDNWQR (369 aa)) are cytoplasmic. A coiled-coil region spans residues 115–141 (ASLVRNASSRIRQVSQELKRLASLNKR). 2 EF-hand-like regions span residues 185 to 195 (TAPTTGLLPRA) and 222 to 233 (RNITTDSINKAQ). 2 EF-hand domains span residues 245-280 (SFDT…SASA) and 289-324 (QSDE…APNQ). Ca(2+) is bound by residues D258, D260, D262, R264, and E269. Residues 370 to 390 (VWVLLLWIGIMAVLFTWKYIQ) form a helical membrane-spanning segment. Topologically, residues 391–402 (YKQKAAYDVMGP) are extracellular. Residues 403–423 (CVCLAKGAAETIKLNMAIILL) traverse the membrane as a helical segment. A Ferric oxidoreductase domain is found at 408 to 565 (KGAAETIKLN…LFIIVYTLLI (158 aa)). The Cytoplasmic portion of the chain corresponds to 424 to 454 (PVCRNTITWLRNKTRLGSAVPFDDNLNFHKV). The chain crosses the membrane as a helical span at residues 455 to 475 (IAVAIALGVAIHGLAHLTCDF). At 476 to 509 (PKLLNASEEAYEPMIYYFGEQPESYWWFVRGVEG) the chain is on the extracellular side. Residues 510–530 (VTGIIMVVLMAIAFTLATPWF) traverse the membrane as a helical segment. The Cytoplasmic portion of the chain corresponds to 531–545 (RRGRVSFPKPFHKLT). The chain crosses the membrane as a helical span at residues 546–566 (GFNAFWYSHHLFIIVYTLLIV). Residues 567–580 (HGEKLYITKDWYKR) lie on the Extracellular side of the membrane. The helical transmembrane segment at 581-599 (STWMYLTVPLVLYAGERLL) threads the bilayer. Positions 599–727 (LRAFRSSIKA…DGPYGAPAQD (129 aa)) constitute an FAD-binding FR-type domain. Residues 600-732 (RAFRSSIKAV…APAQDYKQYE (133 aa)) are Cytoplasmic-facing. The helical transmembrane segment at 733–753 (VVLLVGLGIGATPMISIVKDI) threads the bilayer. Over 754-938 (VNNMKAMDEE…TKFDFHKENF (185 aa)) the chain is Extracellular. The tract at residues 762–796 (EEENSLENGNGMSNAAQNASPNMAQKRGKSSSASG) is disordered. A compositionally biased stretch (polar residues) spans 767–784 (LENGNGMSNAAQNASPNM).

The protein belongs to the RBOH (TC 5.B.1.3) family. As to quaternary structure, monomer and homodimer. Phosphorylated by CPK. In terms of tissue distribution, expressed in leaves.

Its subcellular location is the membrane. Functionally, calcium-dependent NADPH oxidase that generates superoxide. May be responsible for the oxidative burst in response to pathogen attack in the leaves. The protein is Respiratory burst oxidase homolog protein C (RBOHC) of Solanum tuberosum (Potato).